Reading from the N-terminus, the 384-residue chain is PqqA peptide cyclase (384 aa).

The 217-residue stretch at 14–230 (IPAPVGLLAE…EAARERLKGQ (217 aa)) folds into the Radical SAM core domain. Residues Cys28, Cys32, and Cys35 each coordinate [4Fe-4S] cluster.

It belongs to the radical SAM superfamily. PqqE family. In terms of assembly, interacts with PqqD. The interaction is necessary for activity of PqqE. It depends on [4Fe-4S] cluster as a cofactor.

It catalyses the reaction [PQQ precursor protein] + S-adenosyl-L-methionine = E-Y cross-linked-[PQQ precursor protein] + 5'-deoxyadenosine + L-methionine + H(+). It participates in cofactor biosynthesis; pyrroloquinoline quinone biosynthesis. Its function is as follows. Catalyzes the cross-linking of a glutamate residue and a tyrosine residue in the PqqA protein as part of the biosynthesis of pyrroloquinoline quinone (PQQ). The sequence is that of PqqA peptide cyclase from Methylorubrum extorquens (strain CM4 / NCIMB 13688) (Methylobacterium extorquens).